The chain runs to 452 residues: Chromosomal replication initiator protein DnaA (452 aa).

A domain I, interacts with DnaA modulators region spans residues 1 to 85 (MSTTAWQKCL…IEVGSKPVEA (85 aa)). Residues 85-115 (AVDTPAETIVTSSSTAPLKSAPKKAVDYKSS) form a domain II region. Residues 116–332 (HLNKKFVFDS…GALRRVIANA (217 aa)) are domain III, AAA+ region. ATP contacts are provided by glycine 160, glycine 162, lysine 163, and threonine 164. Residues 333-452 (HFTGKPITIE…YKNLMRILSS (120 aa)) are domain IV, binds dsDNA.

It belongs to the DnaA family. As to quaternary structure, oligomerizes as a right-handed, spiral filament on DNA at oriC.

The protein resides in the cytoplasm. In terms of biological role, plays an essential role in the initiation and regulation of chromosomal replication. ATP-DnaA binds to the origin of replication (oriC) to initiate formation of the DNA replication initiation complex once per cell cycle. Binds the DnaA box (a 9 base pair repeat at the origin) and separates the double-stranded (ds)DNA. Forms a right-handed helical filament on oriC DNA; dsDNA binds to the exterior of the filament while single-stranded (ss)DNA is stabiized in the filament's interior. The ATP-DnaA-oriC complex binds and stabilizes one strand of the AT-rich DNA unwinding element (DUE), permitting loading of DNA polymerase. After initiation quickly degrades to an ADP-DnaA complex that is not apt for DNA replication. Binds acidic phospholipids. The protein is Chromosomal replication initiator protein DnaA of Legionella pneumophila (strain Paris).